A 734-amino-acid chain; its full sequence is Protein arginine N-methyltransferase 5 (734 aa).

The span at 1 to 16 (MSNRTYADNLFPQQVA) shows a compositional bias: polar residues. The tract at residues 1–39 (MSNRTYADNLFPQQVAEQHEEQMSSGSSPKSNSPSRSIS) is disordered. Over residues 24–39 (SSGSSPKSNSPSRSIS) the composition is skewed to low complexity. A TIM barrel region spans residues 42–329 (EAANSRIHIG…EYSQALRHAV (288 aa)). Positions 360-706 (LQAPLQPLSE…VDNTGVWYEW (347 aa)) constitute an SAM-dependent MTase PRMT-type domain. Tyrosine 376 contributes to the S-adenosyl-L-methionine binding site. Position 379 (phenylalanine 379) interacts with a protein. S-adenosyl-L-methionine contacts are provided by residues 385 to 386 (KY), glutamate 450, and 477 to 478 (DM). A protein is bound by residues glutamate 499 and glutamate 508. Active-site proton donor/acceptor residues include glutamate 499 and glutamate 508. The interval 529–734 (PQKYTSYVKP…PNGESYYMRM (206 aa)) is beta barrel. The tract at residues 541-589 (STHIHQTIKAQSIPYLSRAIPSHGRGEPELDEDEMWIQKYPQGHVRNNM) is dimerization.

It belongs to the class I-like SAM-binding methyltransferase superfamily. Protein arginine N-methyltransferase family. Homodimer. Interacts with cep-1 (via C-terminus domain); does not methylate cep-1. Interacts with cbp-1 (via N-terminus domain and HAT domain); the interaction results in methylation of cbp-1. Component of a complex that contains cep-1 and cbp-1. May interact with pid-2, pid-4 and pid-5.

It is found in the nucleus. The catalysed reaction is L-arginyl-[protein] + 2 S-adenosyl-L-methionine = N(omega),N(omega)'-dimethyl-L-arginyl-[protein] + 2 S-adenosyl-L-homocysteine + 2 H(+). Catalyzes the symmetrical dimethylation of arginine residues in targets such as small nuclear ribonucleoproteins, histone H2A/H4 and cbp-1. Dimethylation occurs in a distributive manner where the protein is released after the addition of the first methyl group prior to rebinding for the addition of the second methyl group. Plays a role in the negative regulation of DNA damage-induced apoptosis. By methylating cbp-1, may prevent apoptosis by repressing the capacity of cbp-1 to enhance cep-1 dependent transcription activation of the programmed cell death activator egl-1. Plays a role in heat and oxidative stress resistance. In Caenorhabditis elegans, this protein is Protein arginine N-methyltransferase 5.